Reading from the N-terminus, the 523-residue chain is ATP synthase subunit alpha (523 aa).

Gly173–Thr180 is an ATP binding site.

The protein belongs to the ATPase alpha/beta chains family. As to quaternary structure, F-type ATPases have 2 components, CF(1) - the catalytic core - and CF(0) - the membrane proton channel. CF(1) has five subunits: alpha(3), beta(3), gamma(1), delta(1), epsilon(1). CF(0) has three main subunits: a(1), b(2) and c(9-12). The alpha and beta chains form an alternating ring which encloses part of the gamma chain. CF(1) is attached to CF(0) by a central stalk formed by the gamma and epsilon chains, while a peripheral stalk is formed by the delta and b chains.

The protein resides in the cell membrane. It carries out the reaction ATP + H2O + 4 H(+)(in) = ADP + phosphate + 5 H(+)(out). Functionally, produces ATP from ADP in the presence of a proton gradient across the membrane. The alpha chain is a regulatory subunit. The chain is ATP synthase subunit alpha from Streptomyces griseus subsp. griseus (strain JCM 4626 / CBS 651.72 / NBRC 13350 / KCC S-0626 / ISP 5235).